The chain runs to 726 residues: Catalase-peroxidase (726 aa).

The tract at residues 1–33 (MSTTDDTHNTLSTGKCPFHQGGHDRSAGAGTAS) is disordered. A cross-link (tryptophyl-tyrosyl-methioninium (Trp-Tyr) (with M-252)) is located at residues 105 to 226 (WHGAGTYRSI…LGATEMGLIY (122 aa)). The active-site Proton acceptor is His106. The tryptophyl-tyrosyl-methioninium (Tyr-Met) (with W-105) cross-link spans 226–252 (YVNPEGPDHSGEPLSAAAAIRATFGNM). Position 267 (His267) interacts with heme b.

Belongs to the peroxidase family. Peroxidase/catalase subfamily. In terms of assembly, homodimer or homotetramer. It depends on heme b as a cofactor. Post-translationally, formation of the three residue Trp-Tyr-Met cross-link is important for the catalase, but not the peroxidase activity of the enzyme.

It carries out the reaction H2O2 + AH2 = A + 2 H2O. The enzyme catalyses 2 H2O2 = O2 + 2 H2O. Functionally, bifunctional enzyme with both catalase and broad-spectrum peroxidase activity. This Salmonella choleraesuis (strain SC-B67) protein is Catalase-peroxidase.